Consider the following 83-residue polypeptide: Acyl carrier protein (83 aa).

In terms of domain architecture, Carrier spans 2-77; it reads STIEEKVKTI…AAIDFISNSH (76 aa). At serine 37 the chain carries O-(pantetheine 4'-phosphoryl)serine.

Belongs to the acyl carrier protein (ACP) family. Post-translationally, 4'-phosphopantetheine is transferred from CoA to a specific serine of apo-ACP by AcpS. This modification is essential for activity because fatty acids are bound in thioester linkage to the sulfhydryl of the prosthetic group.

It is found in the cytoplasm. Its pathway is lipid metabolism; fatty acid biosynthesis. In terms of biological role, carrier of the growing fatty acid chain in fatty acid biosynthesis. The sequence is that of Acyl carrier protein from Blochmanniella pennsylvanica (strain BPEN).